A 309-amino-acid polypeptide reads, in one-letter code: Minor serine/threonine-protein phosphatase PP2A-1 catalytic subunit (309 aa).

Residues Asp57, His59, Asp85, and Asn117 each contribute to the Mn(2+) site. The active-site Proton donor is the His118. His167 and His241 together coordinate Mn(2+). A Leucine methyl ester modification is found at Leu309.

This sequence belongs to the PPP phosphatase family. PP-2A subfamily. Mn(2+) is required as a cofactor.

The catalysed reaction is O-phospho-L-seryl-[protein] + H2O = L-seryl-[protein] + phosphate. The enzyme catalyses O-phospho-L-threonyl-[protein] + H2O = L-threonyl-[protein] + phosphate. In terms of biological role, essential role in cell cycle control. PP2A may be involved in controlling the entry into mitosis, possibly acting as an inhibitor. This chain is Minor serine/threonine-protein phosphatase PP2A-1 catalytic subunit (ppa1), found in Schizosaccharomyces pombe (strain 972 / ATCC 24843) (Fission yeast).